We begin with the raw amino-acid sequence, 372 residues long: Protein REVEILLE 7 (372 aa).

Residues 71-125 form the HTH myb-type domain; the sequence is TVTKQREKWSEEEHDRFLEAIKLYGRGWRQIQEHIGTKTAVQIRSHAQKFFSKMA. A DNA-binding region (H-T-H motif) is located at residues 98–121; sequence WRQIQEHIGTKTAVQIRSHAQKFF. Residues 124 to 204 form a disordered region; it reads MAQEADSRSE…RCSSPNSCTS (81 aa). The segment covering 145 to 155 has biased composition (basic residues); that stretch reads RPKRKPAHPYP. Residues 156-169 are compositionally biased toward pro residues; sequence RKSPVPYTQSPPPN. Residues 178–204 show a composition bias toward polar residues; the sequence is KSPTSVLSSFGSEDQVNRCSSPNSCTS.

It localises to the nucleus. Its function is as follows. Transcription factor involved in phytochrome A-mediated cotyledon opening. Controlled by the central oscillator mediated by LHY and CCA1. Part of a regulatory circadian feedback loop. Regulates its own expression. The polypeptide is Protein REVEILLE 7 (RVE7) (Arabidopsis thaliana (Mouse-ear cress)).